Consider the following 162-residue polypeptide: Cyclic pyranopterin monophosphate synthase (162 aa).

Substrate is bound by residues 75–77 and 113–114; these read LCH and ME. Aspartate 128 is an active-site residue.

The protein belongs to the MoaC family. As to quaternary structure, homohexamer; trimer of dimers.

The catalysed reaction is (8S)-3',8-cyclo-7,8-dihydroguanosine 5'-triphosphate = cyclic pyranopterin phosphate + diphosphate. The protein operates within cofactor biosynthesis; molybdopterin biosynthesis. Its function is as follows. Catalyzes the conversion of (8S)-3',8-cyclo-7,8-dihydroguanosine 5'-triphosphate to cyclic pyranopterin monophosphate (cPMP). The chain is Cyclic pyranopterin monophosphate synthase from Burkholderia ambifaria (strain MC40-6).